The following is a 409-amino-acid chain: MKTDGGNTWRASHSKPLNTANTMGEPFSHSEYSVHADQSEFYLNELTEHSGQDNPCMNTSRLNTNRYGHPVVHPCPKIHCICTQSNIAAIGSDCTGCVDIAQACKMLRGGQGCTQDPCVKNPHTQCFTDVSNHAMRNVLPLNVSNTEQFPIQIEYANGRNPVLNPMDDLAMRAALLLSKDIDLQNTHILPSTRISIEKNIPVAAGLAGGSADAAAVLLGINSAWQTNYSRCDLLGKAGALGADVPFLIWGGAAYGSGTGSCVTFFETQTLYWVLCFSKHPLSTRKVFQELDRQRSGAGCNHHPVFSNPAECAEMLKKAIKRGPEALAALLHNDLTSAAKMLMPEIAERIKAAERCPGILRAIISGSGPTLALLAEDAEAANRACSILKDTGVICKAVSSPAYSSIYWQT.

The segment covering 1-22 has biased composition (polar residues); it reads MKTDGGNTWRASHSKPLNTANT. The segment at 1-26 is disordered; the sequence is MKTDGGNTWRASHSKPLNTANTMGEP. 201–211 provides a ligand contact to ATP; that stretch reads PVAAGLAGGSA. Aspartate 243 is a catalytic residue.

It belongs to the GHMP kinase family. IspE subfamily.

The enzyme catalyses 4-CDP-2-C-methyl-D-erythritol + ATP = 4-CDP-2-C-methyl-D-erythritol 2-phosphate + ADP + H(+). It participates in isoprenoid biosynthesis; isopentenyl diphosphate biosynthesis via DXP pathway; isopentenyl diphosphate from 1-deoxy-D-xylulose 5-phosphate: step 3/6. In terms of biological role, catalyzes the phosphorylation of the position 2 hydroxy group of 4-diphosphocytidyl-2C-methyl-D-erythritol. This Tropheryma whipplei (strain TW08/27) (Whipple's bacillus) protein is 4-diphosphocytidyl-2-C-methyl-D-erythritol kinase (ispE).